Consider the following 22-residue polypeptide: leu leader peptide (22 aa).

The segment at 1-22 (MLHHMTSRANLLLLRRGGSQRS) is disordered. The span at 11-22 (LLLLRRGGSQRS) shows a compositional bias: low complexity.

Its function is as follows. Involved in control of the biosynthesis of leucine. This chain is leu leader peptide (leuL), found in Corynebacterium glutamicum (strain ATCC 13032 / DSM 20300 / JCM 1318 / BCRC 11384 / CCUG 27702 / LMG 3730 / NBRC 12168 / NCIMB 10025 / NRRL B-2784 / 534).